We begin with the raw amino-acid sequence, 202 residues long: Small ribosomal subunit protein uS4 (202 aa).

The disordered stretch occupies residues 21-42 (LSRKSPRRAYPPGQHGQARRKR). An S4 RNA-binding domain is found at 90–152 (MRLDNTVFRL…DRSRKLVETN (63 aa)).

The protein belongs to the universal ribosomal protein uS4 family. As to quaternary structure, part of the 30S ribosomal subunit. Contacts protein S5. The interaction surface between S4 and S5 is involved in control of translational fidelity.

One of the primary rRNA binding proteins, it binds directly to 16S rRNA where it nucleates assembly of the body of the 30S subunit. Its function is as follows. With S5 and S12 plays an important role in translational accuracy. This Synechocystis sp. (strain ATCC 27184 / PCC 6803 / Kazusa) protein is Small ribosomal subunit protein uS4.